Consider the following 400-residue polypeptide: Phosphoglycerate kinase (400 aa).

Residues 22–24 (DLN), arginine 37, 60–63 (HLGR), arginine 119, and arginine 159 contribute to the substrate site. ATP is bound by residues lysine 209, glycine 297, glutamate 328, and 354 to 357 (GGDS).

Belongs to the phosphoglycerate kinase family. Monomer.

Its subcellular location is the cytoplasm. It carries out the reaction (2R)-3-phosphoglycerate + ATP = (2R)-3-phospho-glyceroyl phosphate + ADP. It participates in carbohydrate degradation; glycolysis; pyruvate from D-glyceraldehyde 3-phosphate: step 2/5. The chain is Phosphoglycerate kinase from Saccharopolyspora erythraea (strain ATCC 11635 / DSM 40517 / JCM 4748 / NBRC 13426 / NCIMB 8594 / NRRL 2338).